The following is a 314-amino-acid chain: MKKLTIIFAGTAYFSMRYLDALTKSEHKVIAVITQPDRPSGRGQKIIFSPVKILSIKRNIPIFQPSELKNEKIQREIFNLNADMMIVVSYGKLIPKEILTMFPKGCINVHTSLLPRWRGATPIQSAILFGDKETGISIIKMNEKMDAGTIINSVKCNILPNDTTETLTFKLIEIGIQVLLKTLYYINKNIVVEKEQNEKHATFSKKISKKDALLNWNTEAYLLERLIRAFNPWPVCYFIVNQIAIRVWQAKIIPTVMKSACVGEIVAFNKNGIQINTAHQILNLQKIQFPGKKIINVEKIISSKKHWFHIGKII.

112–115 is a binding site for (6S)-5,6,7,8-tetrahydrofolate; that stretch reads SLLP.

The protein belongs to the Fmt family.

The catalysed reaction is L-methionyl-tRNA(fMet) + (6R)-10-formyltetrahydrofolate = N-formyl-L-methionyl-tRNA(fMet) + (6S)-5,6,7,8-tetrahydrofolate + H(+). Functionally, attaches a formyl group to the free amino group of methionyl-tRNA(fMet). The formyl group appears to play a dual role in the initiator identity of N-formylmethionyl-tRNA by promoting its recognition by IF2 and preventing the misappropriation of this tRNA by the elongation apparatus. In Buchnera aphidicola subsp. Schizaphis graminum (strain Sg), this protein is Methionyl-tRNA formyltransferase.